The chain runs to 872 residues: Alanine--tRNA ligase (872 aa).

Residues His-566, His-570, Cys-668, and His-672 each coordinate Zn(2+).

Belongs to the class-II aminoacyl-tRNA synthetase family. It depends on Zn(2+) as a cofactor.

Its subcellular location is the cytoplasm. It catalyses the reaction tRNA(Ala) + L-alanine + ATP = L-alanyl-tRNA(Ala) + AMP + diphosphate. In terms of biological role, catalyzes the attachment of alanine to tRNA(Ala) in a two-step reaction: alanine is first activated by ATP to form Ala-AMP and then transferred to the acceptor end of tRNA(Ala). Also edits incorrectly charged Ser-tRNA(Ala) and Gly-tRNA(Ala) via its editing domain. This chain is Alanine--tRNA ligase, found in Lactococcus lactis subsp. cremoris (strain SK11).